The chain runs to 244 residues: Small ribosomal subunit protein uS3 (244 aa).

A KH type-2 domain is found at Met-39–Arg-107. Residues Ala-214–Ala-244 form a disordered region. Basic and acidic residues predominate over residues Ser-229–Ala-244.

Belongs to the universal ribosomal protein uS3 family. As to quaternary structure, part of the 30S ribosomal subunit. Forms a tight complex with proteins S10 and S14.

In terms of biological role, binds the lower part of the 30S subunit head. Binds mRNA in the 70S ribosome, positioning it for translation. The chain is Small ribosomal subunit protein uS3 from Rhizobium etli (strain CIAT 652).